The primary structure comprises 354 residues: Chorismate synthase (354 aa).

Arg46 contributes to the NADP(+) binding site. FMN contacts are provided by residues 123–125, 233–234, Gly273, 288–292, and Arg314; these read RVS, NG, and KPTPS.

It belongs to the chorismate synthase family. In terms of assembly, homotetramer. Requires FMNH2 as cofactor.

It carries out the reaction 5-O-(1-carboxyvinyl)-3-phosphoshikimate = chorismate + phosphate. It functions in the pathway metabolic intermediate biosynthesis; chorismate biosynthesis; chorismate from D-erythrose 4-phosphate and phosphoenolpyruvate: step 7/7. Functionally, catalyzes the anti-1,4-elimination of the C-3 phosphate and the C-6 proR hydrogen from 5-enolpyruvylshikimate-3-phosphate (EPSP) to yield chorismate, which is the branch point compound that serves as the starting substrate for the three terminal pathways of aromatic amino acid biosynthesis. This reaction introduces a second double bond into the aromatic ring system. This is Chorismate synthase from Campylobacter curvus (strain 525.92).